The following is a 412-amino-acid chain: Transforming growth factor beta-3 proprotein (412 aa).

An N-terminal signal peptide occupies residues 1-23 (MKMHLQRALVVLALLNLATVSLS). Asn-74, Asn-135, and Asn-142 each carry an N-linked (GlcNAc...) asparagine glycan. The Cell attachment site signature appears at 261–263 (RGD). Gln-293 bears the N5-methylglutamine mark. Disulfide bonds link Cys-307–Cys-316, Cys-315–Cys-378, Cys-344–Cys-409, and Cys-348–Cys-411.

The protein belongs to the TGF-beta family. In terms of assembly, interacts with ASPN. Latency-associated peptide: Homodimer; disulfide-linked. Latency-associated peptide: Interacts with Transforming growth factor beta-3 (TGF-beta-3) chain; interaction is non-covalent and maintains (TGF-beta-3) in a latent state. Latency-associated peptide: Interacts with LRRC32/GARP; leading to regulate activation of TGF-beta-3 and promote epithelial fusion during palate development. Latency-associated peptide: Interacts (via cell attachment site) with integrins, leading to release of the active TGF-beta-3. Transforming growth factor beta-3: Homodimer; disulfide-linked. Transforming growth factor beta-3: Interacts with TGF-beta receptors (TGFBR1 and TGFBR2), leading to signal transduction. In terms of processing, transforming growth factor beta-3 proprotein: The precursor proprotein is cleaved in the Golgi apparatus to form Transforming growth factor beta-3 (TGF-beta-3) and Latency-associated peptide (LAP) chains, which remain non-covalently linked, rendering TGF-beta-3 inactive. Methylated at Gln-293 by N6AMT1. As to expression, expressed in cardiomyocytes.

It is found in the secreted. It localises to the extracellular space. The protein localises to the extracellular matrix. Its function is as follows. Transforming growth factor beta-3 proprotein: Precursor of the Latency-associated peptide (LAP) and Transforming growth factor beta-3 (TGF-beta-3) chains, which constitute the regulatory and active subunit of TGF-beta-3, respectively. Functionally, required to maintain the Transforming growth factor beta-3 (TGF-beta-3) chain in a latent state during storage in extracellular matrix. Associates non-covalently with TGF-beta-3 and regulates its activation via interaction with 'milieu molecules', such as LTBP1 and LRRC32/GARP, that control activation of TGF-beta-3. Interaction with integrins results in distortion of the Latency-associated peptide chain and subsequent release of the active TGF-beta-3. Transforming growth factor beta-3: Multifunctional protein that regulates embryogenesis and cell differentiation and is required in various processes such as secondary palate development. Activation into mature form follows different steps: following cleavage of the proprotein in the Golgi apparatus, Latency-associated peptide (LAP) and Transforming growth factor beta-3 (TGF-beta-3) chains remain non-covalently linked rendering TGF-beta-3 inactive during storage in extracellular matrix. At the same time, LAP chain interacts with 'milieu molecules', such as LTBP1 and LRRC32/GARP that control activation of TGF-beta-3 and maintain it in a latent state during storage in extracellular milieus. TGF-beta-3 is released from LAP by integrins: integrin-binding results in distortion of the LAP chain and subsequent release of the active TGF-beta-3. Once activated following release of LAP, TGF-beta-3 acts by binding to TGF-beta receptors (TGFBR1 and TGFBR2), which transduce signal. In Rattus norvegicus (Rat), this protein is Transforming growth factor beta-3 proprotein (Tgfb3).